The chain runs to 371 residues: MSNFTYTSAFNLSDNSPFNPAIGSSSSSSSALVVASDDDNNTDDACSICLEPFTLQDPSTVTSCKHEYHLQCIIEWSQRSKECPICWQLFVLRDPASQELLAAVEKERLLKTRNISSSSPISIHHSHDDFHSEEEESQFSSFDEQFLRHLTEAAHRRCLLRRRDGQISSSLVSSSDPTTIHPTDLVNLYRLSAISHVEHQNSNPCPSPGSMTPSPVSGHSSIPADSNNGSRISPGPSPSRSSQSPKSPEASSLPEAIKSKLAAASAKYKESISKSKQGLKEKLLARNNSVKELSKGVQREMNAGIAGVARMIERMDFSSKRFGGSAHVSTSTATASGFNFSFKGKRVEANSKSNNNGDKTEPQKLQGGETC.

The segment at 46 to 87 adopts an RING-type; atypical zinc-finger fold; sequence CSICLEPFTLQDPSTVTSCKHEYHLQCIIEWSQRSKECPICW. Disordered stretches follow at residues 199-254 and 348-371; these read HQNS…SSLP and EANS…GETC. Polar residues predominate over residues 200–225; that stretch reads QNSNPCPSPGSMTPSPVSGHSSIPAD. A compositionally biased stretch (low complexity) spans 226-252; that stretch reads SNNGSRISPGPSPSRSSQSPKSPEASS.

Interacts with KRP6. Expressed in stems, flowers, green siliques, cauline leaves, seeds and roots.

It catalyses the reaction S-ubiquitinyl-[E2 ubiquitin-conjugating enzyme]-L-cysteine + [acceptor protein]-L-lysine = [E2 ubiquitin-conjugating enzyme]-L-cysteine + N(6)-ubiquitinyl-[acceptor protein]-L-lysine.. It participates in protein modification; protein ubiquitination. Functionally, E3 ubiquitin-protein ligase involved in the positive regulation of the gametogenesis progression. Mediates the proteasomal degradation of KRP6, a cyclin-dependent kinase inhibitor which accumulates during meiosis and blocks the progression of subsequent mitoses during gametophyte development. Functions in association with RHF2A. Possesses E3 ubiquitin-protein ligase activity when associated with the E2 enzyme UBC8 in vitro. The polypeptide is E3 ubiquitin-protein ligase RHF1A (Arabidopsis thaliana (Mouse-ear cress)).